We begin with the raw amino-acid sequence, 501 residues long: Cystine/glutamate transporter (501 aa).

Over 1 to 43 the chain is Cytoplasmic; the sequence is MVRKPVVSTISKGGYLQGNVNGRLPSLGNKEPPGQEKVQLKRK. Residue serine 26 is modified to Phosphoserine. Residues 44–64 form a helical membrane-spanning segment; that stretch reads VTLLRGVSIIIGTIIGAGIFI. At 65–74 the chain is on the extracellular side; that stretch reads SPKGVLQNTG. A helical membrane pass occupies residues 75–95; sequence SVGMSLTIWTVCGVLSLFGAL. Over 96 to 101 the chain is Cytoplasmic; that stretch reads SYAELG. The stretch at 102–116 is an intramembrane region; sequence TTIKKSGGHYTYILE. The Cytoplasmic segment spans residues 117-130; that stretch reads VFGPLPAFVRVWVE. A helical membrane pass occupies residues 131 to 150; the sequence is LLIIRPAATAVISLAFGRYI. Arginine 135 is an L-glutamate binding site. Topologically, residues 151–163 are extracellular; sequence LEPFFIQCEIPEL. The helical transmembrane segment at 164–179 threads the bilayer; sequence AIKLITAVGITVVMVL. Over 180-193 the chain is Cytoplasmic; the sequence is NSMSVSWSARIQIF. Residues 194–210 traverse the membrane as a helical segment; sequence LTFCKLTAILIIIVPGV. At 211–234 the chain is on the extracellular side; that stretch reads MQLIKGQTQNFKDAFSGRDSSITR. The helical transmembrane segment at 235-255 threads the bilayer; the sequence is LPLAFYYGMYAYAGWFYLNFV. Tyrosine 244 provides a ligand contact to L-glutamate. The Cytoplasmic segment spans residues 256–265; that stretch reads TEEVENPEKT. Residues 266–286 form a helical membrane-spanning segment; the sequence is IPLAICISMAIVTIGYVLTNV. The Extracellular segment spans residues 287-317; the sequence is AYFTTINAEELLLSNAVAVTFSERLLGNFSL. Asparagine 314 carries N-linked (GlcNAc...) asparagine glycosylation. A helical transmembrane segment spans residues 318–338; it reads AVPIFVALSCFGSMNGGVFAV. Residues 339–364 are Cytoplasmic-facing; that stretch reads SRLFYVASREGHLPEILSMIHVRKHT. Residues 365 to 385 traverse the membrane as a helical segment; that stretch reads PLPAVIVLHPLTMIMLFSGDL. At 386–387 the chain is on the extracellular side; that stretch reads DS. The chain crosses the membrane as a helical span at residues 388-408; that stretch reads LLNFLSFARWLFIGLAVAGLI. Residues 409 to 422 are Cytoplasmic-facing; sequence YLRYKCPDMHRPFK. The helical transmembrane segment at 423–443 threads the bilayer; it reads VPLFIPALFSFTCLFMVALSL. Over 444 to 449 the chain is Extracellular; it reads YSDPFS. The helical transmembrane segment at 450 to 470 threads the bilayer; the sequence is TGIGFVITLTGVPAYYLFIIW. Topologically, residues 471–501 are cytoplasmic; it reads DKKPRWFRIMSEKITRTLQIILEVVPEEDKL.

It belongs to the amino acid-polyamine-organocation (APC) superfamily. L-type amino acid transporter (LAT) (TC 2.A.3.8) family. As to quaternary structure, disulfide-linked heterodimer with the amino acid transport protein SLC3A2/4F2hc; this interaction mediates cell membrane localization. Post-translationally, ubiquitinated by TRIM26; leading to proteasomal degradation. As to expression, expressed in term placenta and primary term cytotrophoblast. Expressed mainly in the brain, but also in pancreas.

The protein resides in the cell membrane. It is found in the cell projection. Its subcellular location is the microvillus membrane. The enzyme catalyses L-cystine(out) + L-glutamate(in) = L-cystine(in) + L-glutamate(out). It catalyses the reaction an L-alpha-amino acid(in) + L-kynurenine(out) = an L-alpha-amino acid(out) + L-kynurenine(in). It carries out the reaction N-acetyl-L-cysteine(out) + L-glutamate(in) = N-acetyl-L-cysteine(in) + L-glutamate(out). With respect to regulation, inhibited by erastin and sulfasalazine. Inhibited by (S)-lactate. Inactivated by p-chloromercuribenzoic acid and p-chloromercuribenzenesulfonic acid. Functionally, heterodimer with SLC3A2, that functions as an antiporter by mediating the exchange of extracellular anionic L-cystine and intracellular L-glutamate across the cellular plasma membrane. Provides L-cystine for the maintenance of the redox balance between extracellular L-cystine and L-cysteine and for the maintenance of the intracellular levels of glutathione that is essential for cells protection from oxidative stress. The transport is sodium-independent, electroneutral with a stoichiometry of 1:1, and is drove by the high intracellular concentration of L-glutamate and the intracellular reduction of L-cystine. In addition, mediates the import of L-kynurenine leading to anti-ferroptotic signaling propagation required to maintain L-cystine and glutathione homeostasis. Moreover, mediates N-acetyl-L-cysteine uptake into the placenta leading to subsequently down-regulation of pathways associated with oxidative stress, inflammation and apoptosis. In vitro can also transport L-aspartate. May participate in astrocyte and meningeal cell proliferation during development and can provide neuroprotection by promoting glutathione synthesis and delivery from non-neuronal cells such as astrocytes and meningeal cells to immature neurons. Controls the production of pheomelanin pigment directly. This chain is Cystine/glutamate transporter, found in Homo sapiens (Human).